The sequence spans 204 residues: GTP cyclohydrolase-2 (204 aa).

49-53 (RIHSE) provides a ligand contact to GTP. Residues C54, C65, and C67 each contribute to the Zn(2+) site. Residues Q70, 92 to 94 (EGR), and T114 contribute to the GTP site. Catalysis depends on D126, which acts as the Proton acceptor. Residue R128 is the Nucleophile of the active site. GTP contacts are provided by T149 and K154.

Belongs to the GTP cyclohydrolase II family. Zn(2+) is required as a cofactor.

It catalyses the reaction GTP + 4 H2O = 2,5-diamino-6-hydroxy-4-(5-phosphoribosylamino)-pyrimidine + formate + 2 phosphate + 3 H(+). It participates in cofactor biosynthesis; riboflavin biosynthesis; 5-amino-6-(D-ribitylamino)uracil from GTP: step 1/4. Its function is as follows. Catalyzes the conversion of GTP to 2,5-diamino-6-ribosylamino-4(3H)-pyrimidinone 5'-phosphate (DARP), formate and pyrophosphate. In Shewanella baltica (strain OS155 / ATCC BAA-1091), this protein is GTP cyclohydrolase-2.